The sequence spans 204 residues: Dephospho-CoA kinase (204 aa).

The DPCK domain maps to 3-200; it reads VVAITGGIGS…ETYMAFASQQ (198 aa). 11–16 lines the ATP pocket; it reads GSGKTT.

This sequence belongs to the CoaE family.

The protein localises to the cytoplasm. The catalysed reaction is 3'-dephospho-CoA + ATP = ADP + CoA + H(+). It participates in cofactor biosynthesis; coenzyme A biosynthesis; CoA from (R)-pantothenate: step 5/5. In terms of biological role, catalyzes the phosphorylation of the 3'-hydroxyl group of dephosphocoenzyme A to form coenzyme A. This Aeromonas hydrophila protein is Dephospho-CoA kinase.